The following is a 263-amino-acid chain: CRISPR-associated protein Cas5 2 (263 aa).

This sequence belongs to the CRISPR-associated protein Cas5 family. Subtype I-A/Apern subfamily. As to quaternary structure, part of the aCascade ribonucleoprotein complex, minimally composed of Csa2 and Cas5a, which binds crRNA. Other possible components of aCascade in strain P1 are Cas6b (SSO1437) and Csa5 (SSO1443), while SSO1399, Cas5b (SSO1400) and SSO1401 have sometimes been seen weakly associated. Csa2 is probably the major RNA-binding subunit. The Csa2-Cas5a-crRNA complex also binds target DNA homologous to crRNA, probably forming an R-loop. Purified aCascade forms a filament about 6 nm in width.

Its function is as follows. CRISPR (clustered regularly interspaced short palindromic repeat) is an adaptive immune system that provides protection against mobile genetic elements (viruses, transposable elements and conjugative plasmids). CRISPR clusters contain spacers, sequences complementary to antecedent mobile elements, and target invading nucleic acids. CRISPR clusters are transcribed and processed into CRISPR RNA (crRNA). This Saccharolobus solfataricus (strain ATCC 35092 / DSM 1617 / JCM 11322 / P2) (Sulfolobus solfataricus) protein is CRISPR-associated protein Cas5 2 (cas5b).